A 138-amino-acid chain; its full sequence is uncharacterized protein (138 aa).

Positions 9-133 constitute a MsrB domain; that stretch reads EDEWKKELGP…NSASLEFHNE (125 aa). Cys-49, Cys-52, Cys-97, and Cys-100 together coordinate Zn(2+). Cys-122 (nucleophile) is an active-site residue.

It belongs to the MsrB Met sulfoxide reductase family. The cofactor is Zn(2+).

Its subcellular location is the cytoplasm. The protein resides in the nucleus. This is an uncharacterized protein from Schizosaccharomyces pombe (strain 972 / ATCC 24843) (Fission yeast).